A 1051-amino-acid polypeptide reads, in one-letter code: Putative transcription factor SEF1 (1051 aa).

Positions 1–10 (MSTDVSERGA) are enriched in basic and acidic residues. Disordered regions lie at residues 1 to 54 (MSTD…SEES) and 67 to 90 (GQAS…RPVT). Over residues 11 to 21 (EAGSSSGLLSS) the composition is skewed to low complexity. The segment at residues 92–122 (CTHCRQHKIKCNASENFPSSCSRCERMGLQC) is a DNA-binding region (zn(2)-C6 fungal-type). Residues 206–218 (SSVKSSVNTPSGS) are compositionally biased toward low complexity. 3 disordered regions span residues 206-227 (SSVK…VDVS), 738-759 (EKNR…TEKR), and 927-968 (ASGN…QPAP).

It localises to the nucleus. Its function is as follows. Putative transcription factor. The protein is Putative transcription factor SEF1 (SEF1) of Eremothecium gossypii (strain ATCC 10895 / CBS 109.51 / FGSC 9923 / NRRL Y-1056) (Yeast).